A 632-amino-acid polypeptide reads, in one-letter code: Extracellular metalloproteinase 2 (632 aa).

Positions 1 to 19 (MHGLLLAGLAAALPLGVAG) are cleaved as a signal peptide. The propeptide occupies 20-244 (LPARQQSGLS…VHNVVDYVAS (225 aa)). A glycan (N-linked (GlcNAc...) asparagine) is linked at asparagine 270. Histidine 429 is a Zn(2+) binding site. Glutamate 430 is a catalytic residue. Histidine 433 serves as a coordination point for Zn(2+).

The protein belongs to the peptidase M36 family. Requires Zn(2+) as cofactor.

It localises to the secreted. In terms of biological role, secreted metalloproteinase probably acting as a virulence factor. The chain is Extracellular metalloproteinase 2 (MEP2) from Trichophyton rubrum (Athlete's foot fungus).